We begin with the raw amino-acid sequence, 149 residues long: Oocyte-expressed protein homolog (149 aa).

The interval 1-23 (MVDDAGTAESQRGKQTPADSLEQ) is disordered. The span at 8 to 18 (AESQRGKQTPA) shows a compositional bias: polar residues. One can recognise a KH; atypical domain in the interval 49-110 (PLVFYLEAWL…SVQNRVKSML (62 aa)).

Belongs to the KHDC1 family. Component of the subcortical maternal complex (SCMC), at least composed of NLRP5, KHDC3, OOEP, and TLE6. Within the complex, interacts with NLRP5, KHDC3 and TLE6. As part of the SCMC interacts with the SCMC-associated protein NLRP4F. The SCMC may facilitate translocation of its components between the nuclear and cytoplasmic compartments. Forms a scaffold complex with KHDC3/FILIA, and interacts with BLM and TRIM25 at DNA replication forks.

It is found in the cytoplasm. It localises to the nucleus. Functionally, component of the subcortical maternal complex (SCMC), a multiprotein complex that plays a key role in early embryonic development. The SCMC complex is a structural constituent of cytoplasmic lattices, which consist in fibrous structures found in the cytoplasm of oocytes and preimplantation embryos. They are required to store maternal proteins critical for embryonic development, such as proteins that control epigenetic reprogramming of the preimplantation embryo, and prevent their degradation or activation. As part of the OOEP-KHDC3 scaffold, recruits BLM and TRIM25 to DNA replication forks, thereby promoting the ubiquitination of BLM by TRIM25, enhancing BLM retainment at replication forks and therefore promoting stalled replication fork restart. Positively regulates the homologous recombination-mediated DNA double-strand break (DSB) repair pathway by regulating ATM activation and RAD51 recruitment to DSBs in oocytes. Thereby contributes to oocyte survival and the resumption and completion of meiosis. The protein is Oocyte-expressed protein homolog (OOEP) of Papio anubis (Olive baboon).